The sequence spans 55 residues: MAVPKKRTSTSKKRIRKNIWKRKGYSIALKAFSLAKSLSTGNSKSFFVRQTKINK.

It belongs to the bacterial ribosomal protein bL32 family.

The protein resides in the plastid. It localises to the chloroplast. The sequence is that of Large ribosomal subunit protein bL32c from Nicotiana sylvestris (Wood tobacco).